The chain runs to 791 residues: RAS guanyl-releasing protein 1 (791 aa).

In terms of domain architecture, N-terminal Ras-GEF spans 49–172; that stretch reads LGKLSKGASL…RLIDTAQINS (124 aa). The ras exchanger motif region; required for transforming activity stretch occupies residues 53–106; sequence SKGASLDDLIQMCIQAFDLDGNMGQNSELLQIMLTMHGFLLPSTELLMKLRTLY. One can recognise a Ras-GEF domain in the interval 201–432; it reads EPQELAEHLT…YELSYAREPR (232 aa). 2 consecutive EF-hand domains span residues 466–501 and 502–528; these read HVQRMVDSVFKNYDLDQDGYISQEEFEKIAASFPFS and FCVMDKDREGLISRQEITAYFMRASSI. Residues Asp-479, Asp-481, Asp-483, Tyr-485, Glu-490, Asp-506, Asp-508, Glu-510, and Glu-517 each coordinate Ca(2+). Residues 537–587 form a Phorbol-ester/DAG-type zinc finger; that stretch reads LHNFQETTYLRPTFCDNCAGFLWGVIKQGYRCKDCGMNCHKQCKELVVFEC. Positions 683–695 are enriched in polar residues; that stretch reads QVPSPQRSRTPGL. Residues 683 to 715 form a disordered region; it reads QVPSPQRSRTPGLTSHLPISPMPSPCPSPVPTR. Over residues 702 to 712 the composition is skewed to pro residues; sequence SPMPSPCPSPV. A coiled-coil region spans residues 728–785; that stretch reads IRKARAELRGGKAGIQELEKEKALLKEENTTLKIQLKDAQRRVETLRAELRKYVLDSD.

It belongs to the RASGRP family.

The protein resides in the cytoplasm. It localises to the cytosol. Its subcellular location is the cell membrane. It is found in the golgi apparatus membrane. The protein localises to the endoplasmic reticulum membrane. Regulated by F-actin polymerization and probably by calcium. Functions as a diacylglycerol (DAG)-regulated nucleotide exchange factor specifically activating Ras through the exchange of bound GDP for GTP. This chain is RAS guanyl-releasing protein 1 (rasgrp1), found in Xenopus tropicalis (Western clawed frog).